Here is a 626-residue protein sequence, read N- to C-terminus: DNA mismatch repair protein MutL (626 aa).

The tract at residues 377–413 (EEPQAVKQPTQLWQPSTKPIIEEPIQEEKSWDSNEEG) is disordered. The span at 383–393 (KQPTQLWQPST) shows a compositional bias: polar residues.

The protein belongs to the DNA mismatch repair MutL/HexB family.

In terms of biological role, this protein is involved in the repair of mismatches in DNA. It is required for dam-dependent methyl-directed DNA mismatch repair. May act as a 'molecular matchmaker', a protein that promotes the formation of a stable complex between two or more DNA-binding proteins in an ATP-dependent manner without itself being part of a final effector complex. This is DNA mismatch repair protein MutL from Bacillus anthracis (strain A0248).